A 494-amino-acid polypeptide reads, in one-letter code: Integrin beta-like protein 1 (494 aa).

An N-terminal signal peptide occupies residues 1 to 23 (MHPPGFKNFLLLVSSLFFIGLSA). 40 disulfides stabilise this stretch: Cys40–Cys71, Cys51–Cys69, Cys63–Cys74, Cys76–Cys89, Cys91–Cys112, Cys96–Cys110, Cys104–Cys115, Cys117–Cys126, Cys132–Cys159, Cys143–Cys157, Cys151–Cys162, Cys164–Cys178, Cys180–Cys202, Cys185–Cys200, Cys194–Cys205, Cys207–Cys216, Cys220–Cys247, Cys231–Cys245, Cys239–Cys250, Cys252–Cys269, Cys271–Cys296, Cys276–Cys294, Cys288–Cys299, Cys301–Cys310, Cys316–Cys343, Cys327–Cys341, Cys335–Cys346, Cys348–Cys361, Cys363–Cys384, Cys368–Cys382, Cys376–Cys387, Cys389–Cys398, Cys404–Cys431, Cys415–Cys429, Cys423–Cys434, Cys436–Cys448, Cys450–Cys471, Cys455–Cys469, Cys463–Cys474, and Cys476–Cys485. I-EGF domains lie at 40–90 (CRLS…PLCE), 91–127 (CHDW…EACQ), 132–179 (CDLT…KFCE), 180–217 (CDDR…DKCE), 220–270 (CDIT…DTCE), 271–311 (CDER…KKCE), 316–362 (CPLS…KTCE), 363–399 (CDDR…KLCQ), 404–449 (CNMT…EFCD), and 450–486 (CDDR…NACE). One copy of the I repeat lies at 51-95 (CRAPGQPPGSALCHDRGRCECGVCICHVTEPGTYFGPLCECHDWV). A cysteine-rich tandem repeats region spans residues 51-494 (CRAPGQPPGS…CEIWLGTEYP (444 aa)). An II repeat occupies 96–142 (CETYDGKTCAGHGTCDCGKCKCDVGWSGEACQYPTKCDLTKKISNQM). The III repeat unit spans residues 143–184 (CKNSQDVICSNAGTCHCGRCKCDNSDGHGLIYGKFCECDDRE). The stretch at 185-230 (CIDDETEEICGGHGKCYCGNCYCEAGWHGDKCEFQCDITPWESKRR) is one IV repeat. The V repeat unit spans residues 231 to 275 (CTSPDGKVCSNRGTCVCGECSCHDVDPTGDWGDIHGDTCECDERD). The stretch at 276-326 (CRAVYDRYSDDFCSGHGQCNCGRCDCRAGWYGKKCEHPKNCPLSAEESTRK) is one VI repeat. The VII repeat unit spans residues 327–367 (CQGSSDLPCSGRGRCECGRCTCYPPGDSRVYGKTCECDDRR). The stretch at 368–414 (CEDLDGVVCGGRGTCSCGRCVCEKGWFGKLCQHPRKCNMTEEQSRSL) is one VIII repeat. N-linked (GlcNAc...) asparagine glycosylation is present at Asn405. One copy of the IX repeat lies at 415-454 (CESADGTLCSGKGSCHCGKCICSGEEWYISGEFCDCDDRD). One copy of the X repeat lies at 455–494 (CDKHDGLICTGNGICSCGNCECWDGWNGNACEIWLGTEYP).

It is found in the secreted. This chain is Integrin beta-like protein 1 (Itgbl1), found in Rattus norvegicus (Rat).